A 446-amino-acid polypeptide reads, in one-letter code: Cytochrome P450 monooxygenase ptmP (446 aa).

A helical membrane pass occupies residues 19–39; it reads VTVIWILMALVLLAYLILPNP. Heme is bound at residue Cys-385. The N-linked (GlcNAc...) asparagine glycan is linked to Asn-430.

This sequence belongs to the cytochrome P450 family. Heme serves as cofactor.

The protein localises to the membrane. It functions in the pathway secondary metabolite biosynthesis. Its function is as follows. Cytochrome P450 monooxygenase; part of the gene cluster that mediates the biosynthesis of the indole diterpenes penitrems. The geranylgeranyl diphosphate (GGPP) synthase ptmG catalyzes the first step in penitrem biosynthesis via conversion of farnesyl pyrophosphate and isopentyl pyrophosphate into geranylgeranyl pyrophosphate (GGPP). Condensation of indole-3-glycerol phosphate with GGPP by the prenyl transferase ptmC then forms 3-geranylgeranylindole (3-GGI). Epoxidation by the FAD-dependent monooxygenase ptmM leads to a epoxidized-GGI that is substrate of the terpene cyclase ptmB for cyclization to yield paspaline. Paspaline is subsequently converted to 13-desoxypaxilline by the cytochrome P450 monooxygenase ptmP, the latter being then converted to paxilline by the cytochrome P450 monooxygenase ptmQ. Paxilline is converted to beta-paxitriol via C-10 ketoreduction by the short-chain dehydrogenase ptmH which can be monoprenylated at the C-20 by the indole diterpene prenyltransferase ptmD. A two-step elimination (acetylation and elimination) process performed by the O-acetyltransferase ptmV and ptmI leads to the production of the prenylated form of penijanthine. The FAD-linked oxidoreductase ptmO then converts the prenylated form of penijanthine into PC-M5 which is in turn transformed into PC-M4 by the aromatic dimethylallyltransferase ptmE. Five sequential oxidative transformations performed by the cytochrome P450 monooxygenases ptmK, ptmU, ptmL, ptmN and ptmJ yield the various penitrem compounds. PtmK, ptmU and ptmM are involved in the formation of the key bicyclic ring of penitrem C via the formation of the intermediates secopenitrem D and penitrem D. PtmL catalyzes the epoxidation of penitrem D and C to yield penitrem B and F, respectively. PtmJ catalyzes the last benzylic hydroxylation to convert penitrem B to prenitrem E and penitrem F to penitrem A. This chain is Cytochrome P450 monooxygenase ptmP, found in Penicillium ochrochloron.